Here is a 393-residue protein sequence, read N- to C-terminus: Formate-dependent phosphoribosylglycinamide formyltransferase (393 aa).

Residues 22–23 (EL) and glutamate 82 each bind N(1)-(5-phospho-beta-D-ribosyl)glycinamide. ATP-binding positions include arginine 114, lysine 155, 160–165 (SSGKGQ), 195–198 (EGFI), and glutamate 203. An ATP-grasp domain is found at 119 to 308 (RLAAEELKLP…QFALHARAIL (190 aa)). 2 residues coordinate Mg(2+): glutamate 267 and glutamate 279. N(1)-(5-phospho-beta-D-ribosyl)glycinamide-binding positions include aspartate 286, lysine 356, and 363–364 (RR).

It belongs to the PurK/PurT family. In terms of assembly, homodimer.

It catalyses the reaction N(1)-(5-phospho-beta-D-ribosyl)glycinamide + formate + ATP = N(2)-formyl-N(1)-(5-phospho-beta-D-ribosyl)glycinamide + ADP + phosphate + H(+). Its pathway is purine metabolism; IMP biosynthesis via de novo pathway; N(2)-formyl-N(1)-(5-phospho-D-ribosyl)glycinamide from N(1)-(5-phospho-D-ribosyl)glycinamide (formate route): step 1/1. Involved in the de novo purine biosynthesis. Catalyzes the transfer of formate to 5-phospho-ribosyl-glycinamide (GAR), producing 5-phospho-ribosyl-N-formylglycinamide (FGAR). Formate is provided by PurU via hydrolysis of 10-formyl-tetrahydrofolate. The polypeptide is Formate-dependent phosphoribosylglycinamide formyltransferase (Pseudomonas savastanoi pv. phaseolicola (strain 1448A / Race 6) (Pseudomonas syringae pv. phaseolicola (strain 1448A / Race 6))).